We begin with the raw amino-acid sequence, 315 residues long: Replication factor C small subunit (315 aa).

43–50 (GSPGVGKT) provides a ligand contact to ATP.

Belongs to the activator 1 small subunits family. RfcS subfamily. In terms of assembly, heteromultimer composed of small subunits (RfcS) and large subunits (RfcL).

Functionally, part of the RFC clamp loader complex which loads the PCNA sliding clamp onto DNA. In Methanococcus vannielii (strain ATCC 35089 / DSM 1224 / JCM 13029 / OCM 148 / SB), this protein is Replication factor C small subunit.